The primary structure comprises 151 residues: Protein-export protein SecB (151 aa).

Belongs to the SecB family. In terms of assembly, homotetramer, a dimer of dimers. One homotetramer interacts with 1 SecA dimer.

The protein localises to the cytoplasm. In terms of biological role, one of the proteins required for the normal export of preproteins out of the cell cytoplasm. It is a molecular chaperone that binds to a subset of precursor proteins, maintaining them in a translocation-competent state. It also specifically binds to its receptor SecA. The protein is Protein-export protein SecB of Azoarcus sp. (strain BH72).